Reading from the N-terminus, the 314-residue chain is Prohormone-3 (314 aa).

The signal sequence occupies residues 1–19 (MGRVLLSASSLLLHIQVFT). A helical membrane pass occupies residues 90–112 (YTCVALTVVALVSTMHFGVEAWG).

The protein localises to the membrane. The polypeptide is Prohormone-3 (Apis mellifera (Honeybee)).